The sequence spans 878 residues: Phosphoenolpyruvate carboxylase (878 aa).

Residues H140 and K545 contribute to the active site.

It belongs to the PEPCase type 1 family. Mg(2+) is required as a cofactor.

The enzyme catalyses oxaloacetate + phosphate = phosphoenolpyruvate + hydrogencarbonate. Its function is as follows. Forms oxaloacetate, a four-carbon dicarboxylic acid source for the tricarboxylic acid cycle. The sequence is that of Phosphoenolpyruvate carboxylase from Pseudomonas aeruginosa (strain ATCC 15692 / DSM 22644 / CIP 104116 / JCM 14847 / LMG 12228 / 1C / PRS 101 / PAO1).